The chain runs to 341 residues: Holliday junction branch migration complex subunit RuvB (341 aa).

The segment at 1-182 (MTDADPTLRP…FGIPTRLLFY (182 aa)) is large ATPase domain (RuvB-L). ATP-binding positions include leucine 21, arginine 22, glycine 63, lysine 66, threonine 67, threonine 68, 129–131 (EDF), arginine 172, tyrosine 182, and arginine 219. Threonine 67 contacts Mg(2+). The interval 183 to 253 (TVDELFEIVS…LADHALTRLG (71 aa)) is small ATPAse domain (RuvB-S). Positions 256 to 341 (QLGLDGADRR…RPPGQSDLFG (86 aa)) are head domain (RuvB-H). DNA is bound by residues arginine 292, arginine 311, and arginine 316.

It belongs to the RuvB family. In terms of assembly, homohexamer. Forms an RuvA(8)-RuvB(12)-Holliday junction (HJ) complex. HJ DNA is sandwiched between 2 RuvA tetramers; dsDNA enters through RuvA and exits via RuvB. An RuvB hexamer assembles on each DNA strand where it exits the tetramer. Each RuvB hexamer is contacted by two RuvA subunits (via domain III) on 2 adjacent RuvB subunits; this complex drives branch migration. In the full resolvosome a probable DNA-RuvA(4)-RuvB(12)-RuvC(2) complex forms which resolves the HJ.

Its subcellular location is the cytoplasm. The enzyme catalyses ATP + H2O = ADP + phosphate + H(+). In terms of biological role, the RuvA-RuvB-RuvC complex processes Holliday junction (HJ) DNA during genetic recombination and DNA repair, while the RuvA-RuvB complex plays an important role in the rescue of blocked DNA replication forks via replication fork reversal (RFR). RuvA specifically binds to HJ cruciform DNA, conferring on it an open structure. The RuvB hexamer acts as an ATP-dependent pump, pulling dsDNA into and through the RuvAB complex. RuvB forms 2 homohexamers on either side of HJ DNA bound by 1 or 2 RuvA tetramers; 4 subunits per hexamer contact DNA at a time. Coordinated motions by a converter formed by DNA-disengaged RuvB subunits stimulates ATP hydrolysis and nucleotide exchange. Immobilization of the converter enables RuvB to convert the ATP-contained energy into a lever motion, pulling 2 nucleotides of DNA out of the RuvA tetramer per ATP hydrolyzed, thus driving DNA branch migration. The RuvB motors rotate together with the DNA substrate, which together with the progressing nucleotide cycle form the mechanistic basis for DNA recombination by continuous HJ branch migration. Branch migration allows RuvC to scan DNA until it finds its consensus sequence, where it cleaves and resolves cruciform DNA. The polypeptide is Holliday junction branch migration complex subunit RuvB (Ruegeria pomeroyi (strain ATCC 700808 / DSM 15171 / DSS-3) (Silicibacter pomeroyi)).